Reading from the N-terminus, the 366-residue chain is Sulfate/thiosulfate import ATP-binding protein CysA 2 (366 aa).

The ABC transporter domain maps to 14 to 243 (LSVHALCRRF…PASRFVAEFV (230 aa)). 46 to 53 (GPSGCGKT) is a binding site for ATP.

The protein belongs to the ABC transporter superfamily. Sulfate/tungstate importer (TC 3.A.1.6) family. The complex is composed of two ATP-binding proteins (CysA), two transmembrane proteins (CysT and CysW) and a solute-binding protein (CysP).

It is found in the cell inner membrane. The catalysed reaction is sulfate(out) + ATP + H2O = sulfate(in) + ADP + phosphate + H(+). It carries out the reaction thiosulfate(out) + ATP + H2O = thiosulfate(in) + ADP + phosphate + H(+). Part of the ABC transporter complex CysAWTP involved in sulfate/thiosulfate import. Responsible for energy coupling to the transport system. This Chromobacterium violaceum (strain ATCC 12472 / DSM 30191 / JCM 1249 / CCUG 213 / NBRC 12614 / NCIMB 9131 / NCTC 9757 / MK) protein is Sulfate/thiosulfate import ATP-binding protein CysA 2.